Consider the following 365-residue polypeptide: Cobalt-precorrin-5B C(1)-methyltransferase (365 aa).

The protein belongs to the CbiD family.

It catalyses the reaction Co-precorrin-5B + S-adenosyl-L-methionine = Co-precorrin-6A + S-adenosyl-L-homocysteine. It participates in cofactor biosynthesis; adenosylcobalamin biosynthesis; cob(II)yrinate a,c-diamide from sirohydrochlorin (anaerobic route): step 6/10. Functionally, catalyzes the methylation of C-1 in cobalt-precorrin-5B to form cobalt-precorrin-6A. This chain is Cobalt-precorrin-5B C(1)-methyltransferase, found in Clostridium perfringens (strain ATCC 13124 / DSM 756 / JCM 1290 / NCIMB 6125 / NCTC 8237 / Type A).